The chain runs to 316 residues: Metal tolerance protein 8 (316 aa).

At 1-15 (MGPVRHILNERKSRK) the chain is on the cytoplasmic side. Residues 16–36 (IAAFLLINTAYMFVEFTSGFM) traverse the membrane as a helical segment. Over 37–45 (SDSLGLISD) the chain is Vacuolar. The helical transmembrane segment at 46 to 66 (ACHMLFDCAALAIGLYASYIA) threads the bilayer. Topologically, residues 67-80 (RLPANGLYNYGRGR) are cytoplasmic. The chain crosses the membrane as a helical span at residues 81–101 (FEVLSGYVNAVFLVLVGALIV). Residues 102-116 (LESFERILEPREIST) lie on the Vacuolar side of the membrane. A helical transmembrane segment spans residues 117–137 (SSLLTVSIGGLVVNVIGLVFF). Residues 138–176 (HEEHHHAHGEAHSCNGGLQSSENHNKSRNRHHIDHNMEG) are Cytoplasmic-facing. The segment at 147–166 (EAHSCNGGLQSSENHNKSRN) is disordered. Residues 177–197 (IFLHVLADTMGSVGVVISTLL) traverse the membrane as a helical segment. Topologically, residues 198-202 (IKYKG) are vacuolar. The chain crosses the membrane as a helical span at residues 203 to 223 (WLIADPICSVFISIMIVSSVL). Over 224–316 (PLLRNSAEIL…LTIQIECVKR (93 aa)) the chain is Cytoplasmic.

Belongs to the cation diffusion facilitator (CDF) transporter (TC 2.A.4) family. SLC30A subfamily.

The protein localises to the vacuole membrane. Involved in sequestration of excess metal in the cytoplasm into vacuoles to maintain metal homeostasis. This is Metal tolerance protein 8 (MTP8) from Oryza sativa subsp. japonica (Rice).